A 446-amino-acid chain; its full sequence is Maltoporin (446 aa).

The N-terminal stretch at 1 to 25 is a signal peptide; the sequence is MMTTLRKLPLAVAVAAGMMSVQAMA.

The protein belongs to the porin LamB (TC 1.B.3) family. Homotrimer formed of three 18-stranded antiparallel beta-barrels, containing three independent channels.

Its subcellular location is the cell outer membrane. It carries out the reaction beta-maltose(in) = beta-maltose(out). Involved in the transport of maltose and maltodextrins. This chain is Maltoporin, found in Escherichia fergusonii (strain ATCC 35469 / DSM 13698 / CCUG 18766 / IAM 14443 / JCM 21226 / LMG 7866 / NBRC 102419 / NCTC 12128 / CDC 0568-73).